The following is a 174-amino-acid chain: dCTP deaminase, dUMP-forming (174 aa).

Residues 93-98, Asp111, 119-121, Gln138, and Tyr151 each bind dCTP; these read RSSIGR and TLE. The Proton donor/acceptor role is filled by Glu121.

This sequence belongs to the dCTP deaminase family. As to quaternary structure, homotrimer.

The catalysed reaction is dCTP + 2 H2O = dUMP + NH4(+) + diphosphate. The protein operates within pyrimidine metabolism; dUMP biosynthesis; dUMP from dCTP: step 1/1. Its function is as follows. Bifunctional enzyme that catalyzes both the deamination of dCTP to dUTP and the hydrolysis of dUTP to dUMP without releasing the toxic dUTP intermediate. This is dCTP deaminase, dUMP-forming from Leptospira biflexa serovar Patoc (strain Patoc 1 / Ames).